The primary structure comprises 130 residues: Ribosome-binding factor A (130 aa).

The protein belongs to the RbfA family. Monomer. Binds 30S ribosomal subunits, but not 50S ribosomal subunits or 70S ribosomes.

It is found in the cytoplasm. Functionally, one of several proteins that assist in the late maturation steps of the functional core of the 30S ribosomal subunit. Associates with free 30S ribosomal subunits (but not with 30S subunits that are part of 70S ribosomes or polysomes). Required for efficient processing of 16S rRNA. May interact with the 5'-terminal helix region of 16S rRNA. This is Ribosome-binding factor A from Prochlorococcus marinus (strain AS9601).